The chain runs to 783 residues: Protein SEY1 (783 aa).

Residues methionine 1–histidine 677 are Cytoplasmic-facing. Positions glycine 33 to lysine 265 constitute a GB1/RHD3-type G domain. Glycine 43 to serine 50 serves as a coordination point for GTP. Residues histidine 449–threonine 472 are a coiled coil. Residues isoleucine 678–isoleucine 698 form a helical membrane-spanning segment. Residues arginine 699–proline 701 are Lumenal-facing. Residues leucine 702–leucine 722 traverse the membrane as a helical segment. Residues tryptophan 723–aspartate 783 lie on the Cytoplasmic side of the membrane.

The protein belongs to the TRAFAC class dynamin-like GTPase superfamily. GB1/RHD3 GTPase family. RHD3 subfamily.

It localises to the endoplasmic reticulum membrane. Functionally, cooperates with the reticulon proteins and tubule-shaping DP1 family proteins to generate and maintain the structure of the tubular endoplasmic reticulum network. Has GTPase activity, which is required for its function in ER organization. The chain is Protein SEY1 from Candida glabrata (strain ATCC 2001 / BCRC 20586 / JCM 3761 / NBRC 0622 / NRRL Y-65 / CBS 138) (Yeast).